The sequence spans 392 residues: Cytochrome P450 monooxygenase ppzE (392 aa).

The chain crosses the membrane as a helical span at residues 10-30; it reads LELVWFVALYPFACWTLFAVL. N-linked (GlcNAc...) asparagine glycosylation is present at Asn319. Cys353 is a binding site for heme. Residue Asn372 is glycosylated (N-linked (GlcNAc...) asparagine).

Belongs to the cytochrome P450 family. Requires heme as cofactor.

It is found in the membrane. The protein operates within secondary metabolite biosynthesis. In terms of biological role, cytochrome P450 monooxygenase; part of the gene cluster that mediates the biosynthesis of pyrrolopyrazines, secondary metabolites showing insecticidal activity. The role of ppzE within the pathway has still to be determined. The single multifunctional NRPS ppzA is sufficient to produce peramine via condensation of 1-pyrroline-5-carboxylate and arginine, N-methylation of the alpha-amino group of arginine and reduction of the thioester and the cyclization to form an iminium ion resulting in release from the peptide synthetase. Deprotonation of this intermediate and oxidation of the pyrroline ring would give rise to peramine. In Epichloe species that produce only peramine, the peramine synthetase gene is not localized in a gene cluster, in contrast to Metarhizium species that contain additional pyrrolopyrazine biosynthesis genes. The 2-oxoglutarate-Fe(II) type oxidoreductase ppzC hydroxylates peramine to yield the newly identified compound 8-hydroxyperamine whereas ppzD converts L-proline into trans-4-hydroxy-L-proline, a precursor of peramine biosynthesis. This Metarhizium rileyi (strain RCEF 4871) (Nomuraea rileyi) protein is Cytochrome P450 monooxygenase ppzE.